Consider the following 425-residue polypeptide: Nuclear hormone receptor family member nhr-13 (425 aa).

The segment at residues P5 to S83 is a DNA-binding region (nuclear receptor). NR C4-type zinc fingers lie at residues C11–C30 and C46–C71. The disordered stretch occupies residues V108–N148. The span at E113–N130 shows a compositional bias: acidic residues. Low complexity predominate over residues E131–E142. The region spanning E147–W414 is the NR LBD domain.

The protein belongs to the nuclear hormone receptor family. As to quaternary structure, may interact with nuclear hormone receptor nhr-49.

It localises to the nucleus. Its function is as follows. Orphan nuclear receptor. Involved in regulating fatty acid desaturase genes, acting in concert with nuclear hormone receptor nhr-49. The protein is Nuclear hormone receptor family member nhr-13 (nhr-13) of Caenorhabditis elegans.